We begin with the raw amino-acid sequence, 874 residues long: Probable inorganic carbon transporter subunit DabA (874 aa).

Positions 398, 400, 580, and 595 each coordinate Zn(2+).

This sequence belongs to the inorganic carbon transporter (TC 9.A.2) DabA family. In terms of assembly, forms a complex with DabB. Zn(2+) serves as cofactor.

The protein resides in the cell membrane. Its function is as follows. Part of an energy-coupled inorganic carbon pump. This chain is Probable inorganic carbon transporter subunit DabA, found in Bacillus cereus (strain 03BB102).